Consider the following 129-residue polypeptide: MNTNVAFGKKGEDMASAFLKKCGYQILRRNYRSGNNEIDLITKKDNIVAFVEVKTRHNLNYGHPAEAVTLSKQKELIKAAQNFINDNPSQGVDYRFDVVAIILDESKRNAFNEPCEDIFFIEDAFRTLP.

It belongs to the UPF0102 family.

This Chloroherpeton thalassium (strain ATCC 35110 / GB-78) protein is UPF0102 protein Ctha_1382.